The sequence spans 347 residues: Ataxin-7-like protein 3 (347 aa).

The SGF11-type zinc-finger motif lies at 84-105 (CVCPNCSRSIAASRFAPHLEKC). Residues 116–125 (ANRRIANSNN) are compositionally biased toward low complexity. The interval 116 to 184 (ANRRIANSNN…GELSNSDPFK (69 aa)) is disordered. Phosphoserine occurs at positions 129 and 131. Residues 132–141 (DQEDNDDIND) show a composition bias toward acidic residues. The 68-residue stretch at 196–263 (LGPEELRSLL…SLDNDSFDMT (68 aa)) folds into the SCA7 domain. The span at 275–288 (DGSSDLSPSDSGSS) shows a compositional bias: low complexity. The tract at residues 275–347 (DGSSDLSPSD…PTPSIYDDIN (73 aa)) is disordered. Phosphoserine occurs at positions 278, 281, and 326.

This sequence belongs to the SGF11 family. In terms of assembly, component of some SAGA transcription coactivator-HAT complexes, at least composed of ATXN7, ATXN7L3, ENY2, GCN5L2, SUPT3H, TAF10, TRRAP and USP22. Within the SAGA complex, ENY2, ATXN7, ATXN7L3, and USP22 form an additional subcomplex of SAGA called the DUB module (deubiquitination module). Interacts directly with ENY2 and USP22.

The protein localises to the nucleus. Functionally, component of the transcription regulatory histone acetylation (HAT) complex SAGA, a multiprotein complex that activates transcription by remodeling chromatin and mediating histone acetylation and deubiquitination. Within the SAGA complex, participates in a subcomplex that specifically deubiquitinates both histones H2A and H2B. The SAGA complex is recruited to specific gene promoters by activators such as MYC, where it is required for transcription. Required for nuclear receptor-mediated transactivation. Within the complex, it is required to recruit USP22 and ENY2 into the SAGA complex. Regulates H2B monoubiquitination (H2Bub1) levels. Affects subcellular distribution of ENY2, USP22 and ATXN7L3B. This chain is Ataxin-7-like protein 3, found in Homo sapiens (Human).